Reading from the N-terminus, the 163-residue chain is ATP synthase subunit b', chloroplastic (163 aa).

The helical transmembrane segment at 26-46 (ATLPLMAVQILLFMVILNAVF) threads the bilayer.

It belongs to the ATPase B chain family. F-type ATPases have 2 components, F(1) - the catalytic core - and F(0) - the membrane proton channel. F(1) has five subunits: alpha(3), beta(3), gamma(1), delta(1), epsilon(1). F(0) has four main subunits: a(1), b(1), b'(1) and c(10-14). The alpha and beta chains form an alternating ring which encloses part of the gamma chain. F(1) is attached to F(0) by a central stalk formed by the gamma and epsilon chains, while a peripheral stalk is formed by the delta, b and b' chains.

It is found in the plastid. The protein resides in the chloroplast thylakoid membrane. In terms of biological role, f(1)F(0) ATP synthase produces ATP from ADP in the presence of a proton or sodium gradient. F-type ATPases consist of two structural domains, F(1) containing the extramembraneous catalytic core and F(0) containing the membrane proton channel, linked together by a central stalk and a peripheral stalk. During catalysis, ATP synthesis in the catalytic domain of F(1) is coupled via a rotary mechanism of the central stalk subunits to proton translocation. Functionally, component of the F(0) channel, it forms part of the peripheral stalk, linking F(1) to F(0). The b'-subunit is a diverged and duplicated form of b found in plants and photosynthetic bacteria. The protein is ATP synthase subunit b', chloroplastic of Guillardia theta (Cryptophyte).